The chain runs to 314 residues: Deoxymugineic acid synthase 1 (314 aa).

Asp-44 contacts NADP(+). Catalysis depends on Tyr-49, which acts as the Proton donor. His-112 lines the substrate pocket. Residues 158-159 (CN), Gln-180, 258-266 (FDEGRMKEN), and 273-281 (ELSEEERQR) each bind NADP(+).

It belongs to the aldo/keto reductase family.

The catalysed reaction is 2'-deoxymugineate + NAD(+) = 3''-deamino-3''-oxonicotianamine + NADH + H(+). It catalyses the reaction 2'-deoxymugineate + NADP(+) = 3''-deamino-3''-oxonicotianamine + NADPH + H(+). It participates in siderophore biosynthesis. Functionally, catalyzes the reduction of a 3''-keto intermediate during the biosynthesis of 2'-deoxymugineic acid (DMA) from L-Met. Involved in the formation of phytosiderophores (MAs) belonging to the mugineic acid family and required to acquire iron. The polypeptide is Deoxymugineic acid synthase 1 (Zea mays (Maize)).